A 346-amino-acid chain; its full sequence is Calcium homeostasis modulator protein 1 (346 aa).

At 1 to 21 the chain is on the cytoplasmic side; sequence MMDKFRMIFQFLQSNQESFMN. A central pore region spans residues 10-37; it reads QFLQSNQESFMNGICGIMALASAQMYSA. Residues 22–37 traverse the membrane as a helical segment; sequence GICGIMALASAQMYSA. The Extracellular segment spans residues 38 to 49; sequence FDFNCPCLPGYN. 2 cysteine pairs are disulfide-bonded: cysteine 42–cysteine 127 and cysteine 44–cysteine 161. The chain crosses the membrane as a helical span at residues 50–72; the sequence is AAYSAGILLAPPLVLFLLGLVMN. The interval 63–70 is phospholipid-binding; that stretch reads VLFLLGLV. Residues 73 to 99 are Cytoplasmic-facing; the sequence is NNVSMLAEEWKRPLGRRAKDPAVLRYM. The chain crosses the membrane as a helical span at residues 100-125; the sequence is FCSMAQRALIAPVVWVAVTLLDGKCF. Cysteine 101 carries S-palmitoyl cysteine lipidation. Residues 105–117 are phospholipid-binding; the sequence is QRALIAPVVWVAV. Topologically, residues 126 to 180 are extracellular; sequence LCAFCTAVPVSALGNGSLAPGLPAPELARLLARVPCPEIYDGDWLLAREVAVRYL. N-linked (GlcNAc...) asparagine glycosylation is present at asparagine 140. Residues 181–206 traverse the membrane as a helical segment; the sequence is RCISQALGWSFVLLTTLLAFVVRSVR. Residues 192-202 are phospholipid-binding; sequence VLLTTLLAFVV. The Cytoplasmic segment spans residues 207–346; that stretch reads PCFTQAAFLK…KEVATYFSKV (140 aa). The S-palmitoyl cysteine moiety is linked to residue cysteine 208. A disordered region spans residues 313–346; the sequence is LRLGQEEPPLMGNGWAGGGPRPPRKEVATYFSKV.

This sequence belongs to the CALHM family. As to quaternary structure, oligomerizes to form hexamers and octamers. Does not form gap junctions. Associates with CALHM3 as a pore-forming subunit in a hetero-hexameric channel complex. N-glycosylated. Assembly with CALHM3 is associated with N-glycan remodeling and formation of hybrid complex- and high mannose-type glycochains. This N-glycan processing regulates channel trafficking and gating kinetics. In terms of processing, palmitoylated by ZDHHC3, ZDHHC20 and possibly ZDHHC7. Palmitoylation regulates voltage-dependent gating of the channel by shifting it toward more depolarized potentials. As to expression, predominantly expressed in adult brain. Detected also in retinoic acid-differentiated SH-SY5Y cells. Specifically expressed in circumvallate taste bud cells.

The protein localises to the cell membrane. It is found in the endoplasmic reticulum membrane. It localises to the basolateral cell membrane. The catalysed reaction is ATP(in) = ATP(out). It carries out the reaction Ca(2+)(in) = Ca(2+)(out). The enzyme catalyses Mg(2+)(in) = Mg(2+)(out). It catalyses the reaction Na(+)(in) = Na(+)(out). The catalysed reaction is K(+)(in) = K(+)(out). It carries out the reaction Li(+)(in) = Li(+)(out). The enzyme catalyses Rb(+)(in) = Rb(+)(out). It catalyses the reaction Cs(+)(in) = Cs(+)(out). The catalysed reaction is chloride(in) = chloride(out). Its activity is regulated as follows. Regulated by membrane voltage and extracellular Ca(2+). Inhibited by Gd(3+), ruthenium red, and Zn(2+) and partially inhibited by 2-aminoethoxydiphenyl borate. Functionally, pore-forming subunit of gustatory voltage-gated ion channels required for sensory perception of sweet, bitter and umami tastes. With CALHM3 forms a fast-activating voltage-gated ATP-release channel in type II taste bud cells, ATP acting as a neurotransmitter to activate afferent neural gustatory pathways. Acts both as a voltage-gated and calcium-activated ion channel: mediates neuronal excitability in response to membrane depolarization and low extracellular Ca(2+) concentration. Has poor ion selectivity and forms a wide pore (around 14 Angstroms) that mediates permeation of small ions including Ca(2+), Na(+), K(+) and Cl(-), as well as larger ions such as ATP(4-). Mediates Ca(2+) influx and downstream activation of the ERK1 and ERK2 cascade in neurons. Triggers endoplasmic reticulum stress by reducing the Ca(2+) content of the endoplasmic reticulum. May indirectly control amyloid precursor protein (APP) proteolysis and aggregated amyloid-beta (Abeta) peptides levels in a Ca(2+)-dependent manner. This Homo sapiens (Human) protein is Calcium homeostasis modulator protein 1.